A 513-amino-acid chain; its full sequence is Probable tubulin polyglutamylase ttll-15 (513 aa).

The TTL domain maps to 73 to 411 (VTGSYESAHT…STPITKEADI (339 aa)). ATP-binding positions include 216–219 (QKFV), Lys229, and Asp231.

It belongs to the tubulin--tyrosine ligase family. In terms of tissue distribution, expressed in hypodermis and pharyngeal muscles.

In terms of biological role, probable polyglutamylase that forms polyglutamate side chains on tubulin. Probably acts when complexed with other proteins. Appears to be dispensable for polar spindle formation in dividing embryonic cells, for cilia-dependent osmotic avoidance and for male mating behavior. Regulates microtubule dynamics in uterine muscle cells. This is Probable tubulin polyglutamylase ttll-15 from Caenorhabditis elegans.